The following is a 191-amino-acid chain: Ribonuclease HII (191 aa).

In terms of domain architecture, RNase H type-2 spans 7–191; sequence ILMAGVDEVG…YSPVADLISK (185 aa). A divalent metal cation is bound by residues Asp-13, Glu-14, and Asp-103.

Belongs to the RNase HII family. It depends on Mn(2+) as a cofactor. Mg(2+) is required as a cofactor.

The protein localises to the cytoplasm. It catalyses the reaction Endonucleolytic cleavage to 5'-phosphomonoester.. Functionally, endonuclease that specifically degrades the RNA of RNA-DNA hybrids. This Legionella pneumophila (strain Paris) protein is Ribonuclease HII.